Reading from the N-terminus, the 443-residue chain is Differentially expressed in FDCP 8 homolog B (443 aa).

The interval H14–E49 is disordered. The span at P17–D30 shows a compositional bias: basic and acidic residues. Positions S31–L45 are enriched in polar residues. Phorbol-ester/DAG-type zinc fingers lie at residues E134–C185 and I364–C424.

This sequence belongs to the DEF8 family.

Functionally, positively regulates lysosome peripheral distribution and ruffled border formation in osteoclasts. Involved in bone resorption. The protein is Differentially expressed in FDCP 8 homolog B (def8-b) of Xenopus laevis (African clawed frog).